We begin with the raw amino-acid sequence, 140 residues long: MRHGKAGRKLNRTASHRKAMFANMAASLITHEQIVTTLPKAKEIRPIVEKLVTLGKRGDLHARRQAISQIRDAVVVAKLFDAIATRYATRNGGYLRIMKAGFRQGDNAALAVVEFVDRDTSAKGAADKARVAAEEEAAAA.

Belongs to the bacterial ribosomal protein bL17 family. Part of the 50S ribosomal subunit. Contacts protein L32.

The polypeptide is Large ribosomal subunit protein bL17 (Rhizobium rhizogenes (strain K84 / ATCC BAA-868) (Agrobacterium radiobacter)).